A 427-amino-acid chain; its full sequence is MFFTCGSNEAMVVSGFCRSPPVMVAGGRVFVLPCIQQIQRISLNTLTLNVKSEKVYTRHGVPISVTGIAQVKIQGQNKEMLAAACQMFLGKTEAEIAHIALETLEGHQRAIMAHMTVEEIYKDRQKFSEQVFKVASSDLVNMGISVVSYTLKDIHDDQDYLHSLGKARTAQVQKDARIGEAEAKRDAGIREAKAKQEKVSAQYLSEIEMAKAQRDYELKKAAYDIEVNTRRAQADLAYQLQVAKTKQQIEEQRVQVQVVERAQQVAVQEQEIARREKELEARVRKPAEAERYKLERLAEAEKSQLIMQAEAEAESVRMRGEAEAFAIGARARAEAEQMAKKAEAFQLYQEAAQLDMLLEKLPQVAEEISGPLTSANKITLASSGSGTMGAAKVTGEVLDILTRLPESVERLTGVSISQVNHKPLRTA.

Phosphoserine occurs at positions 19, 163, and 385. Position 387 is a phosphothreonine (Thr387).

Belongs to the band 7/mec-2 family. Flotillin subfamily. In terms of assembly, heterooligomeric complex of flotillin-1 and flotillin-2 and caveolin-1 and caveolin-2. Interacts with ECPAS.

The protein localises to the cell membrane. It is found in the endosome. The protein resides in the membrane. It localises to the caveola. Its subcellular location is the melanosome. The protein localises to the membrane raft. Its function is as follows. May act as a scaffolding protein within caveolar membranes, functionally participating in formation of caveolae or caveolae-like vesicles. This is Flotillin-1 (FLOT1) from Pongo abelii (Sumatran orangutan).